Consider the following 133-residue polypeptide: Small ribosomal subunit protein uS8 (133 aa).

This sequence belongs to the universal ribosomal protein uS8 family. As to quaternary structure, part of the 30S ribosomal subunit. Contacts proteins S5 and S12.

Its function is as follows. One of the primary rRNA binding proteins, it binds directly to 16S rRNA central domain where it helps coordinate assembly of the platform of the 30S subunit. The chain is Small ribosomal subunit protein uS8 from Chlamydia felis (strain Fe/C-56) (Chlamydophila felis).